Consider the following 89-residue polypeptide: Small ribosomal subunit protein bS20 (89 aa).

This sequence belongs to the bacterial ribosomal protein bS20 family.

Its function is as follows. Binds directly to 16S ribosomal RNA. This Sulfurovum sp. (strain NBC37-1) protein is Small ribosomal subunit protein bS20.